A 401-amino-acid chain; its full sequence is Subtilisin-like protease 10 (401 aa).

The first 19 residues, 1 to 19, serve as a signal peptide directing secretion; sequence MLFLKAVIAILSVLPAADA. Residues 20–116 constitute a propeptide that is removed on maturation; it reads AAILNFENKQ…IEPDRMASAQ (97 aa). Positions 35-112 constitute an Inhibitor I9 domain; it reads SYIVVLKNDI…QVDYIEPDRM (78 aa). The Peptidase S8 domain occupies 126–401; it reads SWGLGRISHQ…NRLLYNGSGQ (276 aa). Residues Asp158 and His189 each act as charge relay system in the active site. The N-linked (GlcNAc...) asparagine glycan is linked to Asn250. Ser347 (charge relay system) is an active-site residue. Asn397 is a glycosylation site (N-linked (GlcNAc...) asparagine).

Belongs to the peptidase S8 family.

It localises to the secreted. In terms of biological role, secreted subtilisin-like serine protease with keratinolytic activity that contributes to pathogenicity. The polypeptide is Subtilisin-like protease 10 (SUB10) (Arthroderma otae (strain ATCC MYA-4605 / CBS 113480) (Microsporum canis)).